The following is a 215-amino-acid chain: MLQVYLVRHGETQWNAERRIQGQSDSPLTAKGEQQAMQVGERARTLGITHIVSSDLGRTRRTAEIIAQACGCDITFDARLRELDMGVLEKRHIDTLTEEEENWRRQLVNGTVDGRIPDGESMQELSDRVNAALASCLELPQGSRPLLVSHGIALGCLVSTILGLPAWAERRLRLRNCSISRVDYQESLWLAPGWVVETAGDVSHLDAPALDELQR.

Residues 8–15 (RHGETQWN), 21–22 (QG), arginine 58, arginine 60, 82–85 (ELDM), 104–105 (RR), and 151–152 (GI) each bind substrate. Catalysis depends on histidine 9, which acts as the Tele-phosphohistidine intermediate. Glutamate 82 acts as the Proton donor/acceptor in catalysis.

This sequence belongs to the phosphoglycerate mutase family. GpmB subfamily.

It catalyses the reaction (2R)-2-phosphoglycerate = (2R)-3-phosphoglycerate. It participates in carbohydrate degradation; glycolysis; pyruvate from D-glyceraldehyde 3-phosphate: step 3/5. The sequence is that of Probable phosphoglycerate mutase GpmB from Citrobacter koseri (strain ATCC BAA-895 / CDC 4225-83 / SGSC4696).